The primary structure comprises 1050 residues: Self-sufficient cytochrome P450 monooxygenase CYP505E3 (1050 aa).

Cys-406 provides a ligand contact to heme. The span at 459 to 481 (RGQSATGLSQGSMSASGATSSVA) shows a compositional bias: polar residues. The tract at residues 459–495 (RGQSATGLSQGSMSASGATSSVASPGPPAATGAQSNP) is disordered. Positions 501–641 (ISFFYGSNSG…DLELWEETNL (141 aa)) constitute a Flavodoxin-like domain. Residues 507–511 (SNSGT) and 585–617 (VFGC…TRLT) each bind FMN. The FAD-binding FR-type domain maps to 679 to 907 (RGLVEAKVTA…RPAKDAFHLP (229 aa)).

The protein in the N-terminal section; belongs to the cytochrome P450 family. It depends on FAD as a cofactor. FMN is required as a cofactor. Heme serves as cofactor.

The catalysed reaction is 2 oxidized [cytochrome P450] + NADPH = 2 reduced [cytochrome P450] + NADP(+) + H(+). It carries out the reaction an organic molecule + reduced [NADPH--hemoprotein reductase] + O2 = an alcohol + oxidized [NADPH--hemoprotein reductase] + H2O + H(+). It catalyses the reaction decane + reduced [NADPH--hemoprotein reductase] + O2 = 3-decanol + oxidized [NADPH--hemoprotein reductase] + H2O + H(+). The enzyme catalyses dodecane + reduced [NADPH--hemoprotein reductase] + O2 = 5-dodecanol + oxidized [NADPH--hemoprotein reductase] + H2O + H(+). The catalysed reaction is tetradecane + reduced [NADPH--hemoprotein reductase] + O2 = 7-tetradecanol + oxidized [NADPH--hemoprotein reductase] + H2O + H(+). It carries out the reaction hexadecane + reduced [NADPH--hemoprotein reductase] + O2 = 9-hexadecanol + oxidized [NADPH--hemoprotein reductase] + H2O + H(+). It catalyses the reaction dodecanoate + reduced [NADPH--hemoprotein reductase] + O2 = 5-hydroxydodecanoate + oxidized [NADPH--hemoprotein reductase] + H2O + H(+). The enzyme catalyses tetradecanoate + reduced [NADPH--hemoprotein reductase] + O2 = 7-hydroxytetradecanoate + oxidized [NADPH--hemoprotein reductase] + H2O + H(+). The catalysed reaction is hexadecanoate + reduced [NADPH--hemoprotein reductase] + O2 = 9-hydroxyhexadecanoate + oxidized [NADPH--hemoprotein reductase] + H2O + H(+). It carries out the reaction decan-1-ol + reduced [NADPH--hemoprotein reductase] + O2 = 1,3-decanediol + oxidized [NADPH--hemoprotein reductase] + H2O + H(+). It catalyses the reaction decan-1-ol + reduced [NADPH--hemoprotein reductase] + O2 = 1,7-decanediol + oxidized [NADPH--hemoprotein reductase] + H2O + H(+). The enzyme catalyses dodecan-1-ol + reduced [NADPH--hemoprotein reductase] + O2 = 1,5-dodecanediol + oxidized [NADPH--hemoprotein reductase] + H2O + H(+). The catalysed reaction is dodecan-1-ol + reduced [NADPH--hemoprotein reductase] + O2 = 1,4-dodecanediol + oxidized [NADPH--hemoprotein reductase] + H2O + H(+). It carries out the reaction dodecan-1-ol + reduced [NADPH--hemoprotein reductase] + O2 = 1,6-dodecanediol + oxidized [NADPH--hemoprotein reductase] + H2O + H(+). Its function is as follows. Self-sufficient cytochrome P450 monooxygenase that catalyzes the regioselective in-chain hydroxylation of alkanes, fatty alcohols, and fatty acids at the omega-7 position. Performs hydroxylation of C10-C16 n-alkanes and C12 and C14 fatty alcohols; and thereby enables the one step biocatalytic synthesis of rare alcohols such as 5-dodecanol and 7-tetradecanol. Converts 1-dodecanol into 1,5-dodecanediol as major product with very little sub-terminally hydroxylated products with the 1,4-dodecanediol and 1,6-dodecanediol more abundant. Does not use hexadecanediol nor decanoic acid as substrates. Converts dodecanoic acid to 5-hydroxydodecanoic acid which can be further converted into delta-dodecalactone by lactonization of the 5-hydroxy acid at low pH. Also gives sub-terminal hydroxylation of dodecanoic acid with 9-hydroxydodecanoic acid being the second most abundant product. The C14 and C16 fatty acids are double hydroxylated to yield dihydroxy acids hydroxylated at both the omega-7 position and a sub-terminal position (omega-1, omega-2, or omega-3). The protein is Self-sufficient cytochrome P450 monooxygenase CYP505E3 of Aspergillus terreus (strain NIH 2624 / FGSC A1156).